Consider the following 366-residue polypeptide: Galactoside alpha-(1,2)-fucosyltransferase 1 (366 aa).

Topologically, residues 1-8 (MWPLSHRH) are cytoplasmic. A helical; Signal-anchor for type II membrane protein membrane pass occupies residues 9 to 25 (LCLAFLLVCVLSAISFF). At 26–366 (LHIHQDSFPH…LSPLWTLAEP (341 aa)) the chain is on the lumenal side. Residues Asn-66, Asn-302, and Asn-328 are each glycosylated (N-linked (GlcNAc...) asparagine).

This sequence belongs to the glycosyltransferase 11 family.

Its subcellular location is the golgi apparatus. It is found in the golgi stack membrane. It carries out the reaction a beta-D-galactosyl-(1-&gt;4)-N-acetyl-beta-D-glucosaminyl derivative + GDP-beta-L-fucose = an alpha-L-Fuc-(1-&gt;2)-beta-D-Gal-(1-&gt;4)-beta-D-GlcNAc derivative + GDP + H(+). It catalyses the reaction a ganglioside GA1 + GDP-beta-L-fucose = a ganglioside Fuc-GA1 + GDP + H(+). The catalysed reaction is a beta-D-Gal-(1-&gt;3)-beta-D-GlcNAc-(1-&gt;3)-beta-D-Gal-(1-&gt;4)-beta-D-Glc-(1&lt;-&gt;1')-Cer(d18:1(4E)) + GDP-beta-L-fucose = alpha-L-fucosyl-(1-&gt;2)- beta-D-galactosyl-(1-&gt;3)-N-acetyl-beta-D-glucosaminyl-(1-&gt;3)-beta-D-galactosyl-(1-&gt;4)-beta-D-glucosyl-(1&lt;-&gt;1')-N-acylsphing-4-enine + GDP + H(+). The enzyme catalyses a neolactoside nLc4Cer(d18:1(4E)) + GDP-beta-L-fucose = a neolactoside IV(2)-alpha-Fuc-nLc4Cer(d18:1(4E)) + GDP + H(+). It carries out the reaction a ganglioside GM1 + GDP-beta-L-fucose = a ganglioside Fuc-GM1 + GDP + H(+). It catalyses the reaction beta-D-galactosyl-(1-&gt;3)-N-acetyl-D-galactosamine + GDP-beta-L-fucose = alpha-L-fucosyl-(1-&gt;2)-beta-D-galactosyl-(1-&gt;3)-N-acetyl-D-galactosamine + GDP + H(+). The protein operates within protein modification; protein glycosylation. Functionally, catalyzes the transfer of L-fucose, from a guanosine diphosphate-beta-L-fucose, to the terminal galactose residue of glycoconjugates through an alpha(1,2) linkage leading to H antigen synthesis that is an intermediate substrate in the synthesis of ABO blood group antigens. H antigen is essential for maturation of the glomerular layer of the main olfactory bulb, in cell migration and early cell-cell contacts during tumor associated angiogenesis. Preferentially fucosylates soluble lactose and to a lesser extent fucosylates glycolipids gangliosides GA1 and GM1a. The sequence is that of Galactoside alpha-(1,2)-fucosyltransferase 1 from Lagothrix lagotricha (Brown woolly monkey).